A 432-amino-acid chain; its full sequence is Asparagine--tRNA ligase (432 aa).

Belongs to the class-II aminoacyl-tRNA synthetase family. As to quaternary structure, homodimer.

It is found in the cytoplasm. It carries out the reaction tRNA(Asn) + L-asparagine + ATP = L-asparaginyl-tRNA(Asn) + AMP + diphosphate + H(+). The sequence is that of Asparagine--tRNA ligase from Limosilactobacillus reuteri (strain DSM 20016) (Lactobacillus reuteri).